Consider the following 138-residue polypeptide: Large ribosomal subunit protein bL19 (138 aa).

This sequence belongs to the bacterial ribosomal protein bL19 family.

In terms of biological role, this protein is located at the 30S-50S ribosomal subunit interface and may play a role in the structure and function of the aminoacyl-tRNA binding site. The chain is Large ribosomal subunit protein bL19 from Leptospira interrogans serogroup Icterohaemorrhagiae serovar Lai (strain 56601).